The sequence spans 386 residues: Succinate--CoA ligase [ADP-forming] subunit beta (386 aa).

ATP is bound by residues K46, 53–55 (GRG), E99, Q102, and E107. N199 and D213 together coordinate Mg(2+). Residues N264 and 321–323 (GIV) each bind substrate.

It belongs to the succinate/malate CoA ligase beta subunit family. In terms of assembly, heterotetramer of two alpha and two beta subunits. It depends on Mg(2+) as a cofactor.

The enzyme catalyses succinate + ATP + CoA = succinyl-CoA + ADP + phosphate. It catalyses the reaction GTP + succinate + CoA = succinyl-CoA + GDP + phosphate. It functions in the pathway carbohydrate metabolism; tricarboxylic acid cycle; succinate from succinyl-CoA (ligase route): step 1/1. In terms of biological role, succinyl-CoA synthetase functions in the citric acid cycle (TCA), coupling the hydrolysis of succinyl-CoA to the synthesis of either ATP or GTP and thus represents the only step of substrate-level phosphorylation in the TCA. The beta subunit provides nucleotide specificity of the enzyme and binds the substrate succinate, while the binding sites for coenzyme A and phosphate are found in the alpha subunit. This Ruthia magnifica subsp. Calyptogena magnifica protein is Succinate--CoA ligase [ADP-forming] subunit beta.